Consider the following 442-residue polypeptide: Mirror-image polydactyly gene 1 protein (442 aa).

The disordered stretch occupies residues 1–39; that stretch reads MENWSKDITHSYLEQETTGINKSTQPDEQLTMNSEKSMH. Positions 12–35 are enriched in polar residues; the sequence is YLEQETTGINKSTQPDEQLTMNSE. Coiled-coil stretches lie at residues 107 to 212 and 253 to 435; these read SDKE…LENI and ECKM…KVGT.

As to expression, expressed very weakly in heart, liver, skeletal muscle, kidney, pancreas and fetal kidney. Not detected in brain, placenta and lung.

The protein is Mirror-image polydactyly gene 1 protein (MIPOL1) of Homo sapiens (Human).